Consider the following 396-residue polypeptide: Tryptophan synthase beta chain (396 aa).

An N6-(pyridoxal phosphate)lysine modification is found at Lys86.

It belongs to the TrpB family. In terms of assembly, tetramer of two alpha and two beta chains. It depends on pyridoxal 5'-phosphate as a cofactor.

The catalysed reaction is (1S,2R)-1-C-(indol-3-yl)glycerol 3-phosphate + L-serine = D-glyceraldehyde 3-phosphate + L-tryptophan + H2O. It participates in amino-acid biosynthesis; L-tryptophan biosynthesis; L-tryptophan from chorismate: step 5/5. Its function is as follows. The beta subunit is responsible for the synthesis of L-tryptophan from indole and L-serine. This is Tryptophan synthase beta chain from Aliivibrio fischeri (strain ATCC 700601 / ES114) (Vibrio fischeri).